We begin with the raw amino-acid sequence, 336 residues long: Phosphate acyltransferase (336 aa).

It belongs to the PlsX family. As to quaternary structure, homodimer. Probably interacts with PlsY.

It is found in the cytoplasm. It carries out the reaction a fatty acyl-[ACP] + phosphate = an acyl phosphate + holo-[ACP]. It functions in the pathway lipid metabolism; phospholipid metabolism. Functionally, catalyzes the reversible formation of acyl-phosphate (acyl-PO(4)) from acyl-[acyl-carrier-protein] (acyl-ACP). This enzyme utilizes acyl-ACP as fatty acyl donor, but not acyl-CoA. This is Phosphate acyltransferase from Pseudomonas paraeruginosa (strain DSM 24068 / PA7) (Pseudomonas aeruginosa (strain PA7)).